Reading from the N-terminus, the 346-residue chain is Methylthioribose-1-phosphate isomerase (346 aa).

Residues 46 to 48 (RGA), Arg89, and Gln196 each bind substrate. Residue Asp237 is the Proton donor of the active site. Residue 247–248 (NK) coordinates substrate.

The protein belongs to the eIF-2B alpha/beta/delta subunits family. MtnA subfamily.

The catalysed reaction is 5-(methylsulfanyl)-alpha-D-ribose 1-phosphate = 5-(methylsulfanyl)-D-ribulose 1-phosphate. It participates in amino-acid biosynthesis; L-methionine biosynthesis via salvage pathway; L-methionine from S-methyl-5-thio-alpha-D-ribose 1-phosphate: step 1/6. Catalyzes the interconversion of methylthioribose-1-phosphate (MTR-1-P) into methylthioribulose-1-phosphate (MTRu-1-P). The sequence is that of Methylthioribose-1-phosphate isomerase from Geobacter metallireducens (strain ATCC 53774 / DSM 7210 / GS-15).